The following is a 208-amino-acid chain: Ectodysplasin-A receptor-associated adapter protein (208 aa).

Positions 1–18 (MASPDDPLRSDHMAKEPV) are enriched in basic and acidic residues. Residues 1 to 99 (MASPDDPLRS…KGSCSCPSCS (99 aa)) form a disordered region. The segment covering 49 to 61 (TVNSNCPPNSDDQ) has biased composition (polar residues). The region spanning 116–195 (DTIRIKLDPC…KILRRWVDEE (80 aa)) is the Death domain.

Binds EDAR. Self-associates and binds TRAF1, TRAF2 and TRAF3.

The protein localises to the cytoplasm. Adapter protein that interacts with EDAR DEATH domain and couples the receptor to EDA signaling pathway during morphogenesis of ectodermal organs. Mediates the activation of NF-kappa-B. This Mus musculus (Mouse) protein is Ectodysplasin-A receptor-associated adapter protein (Edaradd).